A 224-amino-acid chain; its full sequence is Urease accessory protein UreF (224 aa).

This sequence belongs to the UreF family. In terms of assembly, ureD, UreF and UreG form a complex that acts as a GTP-hydrolysis-dependent molecular chaperone, activating the urease apoprotein by helping to assemble the nickel containing metallocenter of UreC. The UreE protein probably delivers the nickel.

Its subcellular location is the cytoplasm. Functionally, required for maturation of urease via the functional incorporation of the urease nickel metallocenter. This chain is Urease accessory protein UreF, found in Citrobacter koseri (strain ATCC BAA-895 / CDC 4225-83 / SGSC4696).